We begin with the raw amino-acid sequence, 154 residues long: tRNA-splicing endonuclease (154 aa).

Active-site residues include Y86, H102, and K133.

The protein belongs to the tRNA-intron endonuclease family. Archaeal short subfamily. In terms of assembly, homotetramer; although the tetramer contains four active sites, only two participate in the cleavage. Therefore, it should be considered as a dimer of dimers.

The catalysed reaction is pretRNA = a 3'-half-tRNA molecule with a 5'-OH end + a 5'-half-tRNA molecule with a 2',3'-cyclic phosphate end + an intron with a 2',3'-cyclic phosphate and a 5'-hydroxyl terminus.. Its function is as follows. Endonuclease that removes tRNA introns. Cleaves pre-tRNA at the 5'- and 3'-splice sites to release the intron. The products are an intron and two tRNA half-molecules bearing 2',3' cyclic phosphate and 5'-OH termini. Recognizes a pseudosymmetric substrate in which 2 bulged loops of 3 bases are separated by a stem of 4 bp. This is tRNA-splicing endonuclease from Nanoarchaeum equitans (strain Kin4-M).